Here is a 323-residue protein sequence, read N- to C-terminus: tRNA U34 carboxymethyltransferase (323 aa).

Residues lysine 91, tryptophan 105, lysine 110, glycine 130, 152–154 (DPT), 181–182 (IE), methionine 196, tyrosine 200, and arginine 315 contribute to the carboxy-S-adenosyl-L-methionine site.

This sequence belongs to the class I-like SAM-binding methyltransferase superfamily. CmoB family. Homotetramer.

The enzyme catalyses carboxy-S-adenosyl-L-methionine + 5-hydroxyuridine(34) in tRNA = 5-carboxymethoxyuridine(34) in tRNA + S-adenosyl-L-homocysteine + H(+). In terms of biological role, catalyzes carboxymethyl transfer from carboxy-S-adenosyl-L-methionine (Cx-SAM) to 5-hydroxyuridine (ho5U) to form 5-carboxymethoxyuridine (cmo5U) at position 34 in tRNAs. This chain is tRNA U34 carboxymethyltransferase, found in Salmonella typhi.